Here is a 370-residue protein sequence, read N- to C-terminus: D-alanine--D-alanine ligase (370 aa).

The 209-residue stretch at 144–352 folds into the ATP-grasp domain; the sequence is KKIFADAGIP…YGALIERLVD (209 aa). Residue 177–232 coordinates ATP; that stretch reads EEVLTYPVFVKPANLGSSVGISKATNKKELVDAMTEAFLYDRRVVVEQGVVAREIE. D306, E319, and N321 together coordinate Mg(2+).

The protein belongs to the D-alanine--D-alanine ligase family. Mg(2+) serves as cofactor. It depends on Mn(2+) as a cofactor.

The protein localises to the cytoplasm. It carries out the reaction 2 D-alanine + ATP = D-alanyl-D-alanine + ADP + phosphate + H(+). It functions in the pathway cell wall biogenesis; peptidoglycan biosynthesis. In terms of biological role, cell wall formation. The sequence is that of D-alanine--D-alanine ligase from Listeria monocytogenes serovar 1/2a (strain ATCC BAA-679 / EGD-e).